A 110-amino-acid chain; its full sequence is Insulin (110 aa).

The N-terminal stretch at 1 to 24 is a signal peptide; the sequence is MALWMRLLPLLALLALWAPAPTRA. Disulfide bonds link Cys31–Cys96, Cys43–Cys109, and Cys95–Cys100. A propeptide spans 57 to 87 (c peptide); sequence EVEDLQVRDVELAGAPGEGGLQPLALEGALQ.

It belongs to the insulin family. Heterodimer of a B chain and an A chain linked by two disulfide bonds.

The protein resides in the secreted. In terms of biological role, insulin decreases blood glucose concentration. It increases cell permeability to monosaccharides, amino acids and fatty acids. It accelerates glycolysis, the pentose phosphate cycle, and glycogen synthesis in liver. The protein is Insulin (INS) of Canis lupus familiaris (Dog).